Consider the following 238-residue polypeptide: Ciliary microtubule associated protein 1B (238 aa).

One copy of the STPGR repeat lies at 182–207; it reads PGPCAYHVVNPMIYKTRAPQFTMLGR. A disordered region spans residues 206-238; sequence GRTLPPRENTKKPGPASYSVDKVVWSRGSRGRG.

The protein belongs to the CIMAP family.

Its subcellular location is the cell projection. The protein resides in the cilium. It localises to the flagellum. This is Ciliary microtubule associated protein 1B (Cimap1b) from Mus musculus (Mouse).